We begin with the raw amino-acid sequence, 423 residues long: Alpha-1-antichymotrypsin (423 aa).

A signal peptide spans 1–23 (MERMLPFLALGLLVAGFCPAVLC). Asn-93, Asn-106, Asn-127, Asn-186, and Asn-271 each carry an N-linked (GlcNAc...) asparagine glycan. Residues 369 to 394 (GTEASAATAVKITLLSALVDPMTIVR) are RCL.

This sequence belongs to the serpin family. In terms of assembly, interacts with DNAJC1. Plasma.

It localises to the secreted. Its function is as follows. Although its physiological function is unclear, it can inhibit neutrophil cathepsin G and mast cell chymase, both of which can convert angiotensin-1 to the active angiotensin-2. The polypeptide is Alpha-1-antichymotrypsin (SERPINA3) (Pongo abelii (Sumatran orangutan)).